Here is a 590-residue protein sequence, read N- to C-terminus: RNA-binding protein 47 (590 aa).

Positions 1-21 (MTAEDSTTAMNSDPTVGSSTK) are enriched in polar residues. Residues 1–26 (MTAEDSTTAMNSDPTVGSSTKVPEGV) are disordered. 3 consecutive RRM domains span residues 71-149 (CEVF…CSVD), 151-233 (CRLF…WAEP), and 246-318 (KILY…LAKP). 2 positions are modified to asymmetric dimethylarginine; alternate: arginine 396 and arginine 407. An omega-N-methylarginine; alternate mark is found at arginine 396 and arginine 407.

Belongs to the RRM RBM47 family. As to quaternary structure, homodimer. Interacts with A1CF. Interacts with APOBEC1; form an mRNA editing complex. Interacts with RBPMS.

It is found in the nucleus. The protein localises to the cytoplasm. In terms of biological role, single-stranded RNA-binding protein that functions in a variety of RNA processes, including alternative splicing, RNA stabilization, and RNA editing. Functions as an enzyme-substrate adapter for the cytidine deaminase APOBEC1. With APOBEC1 forms an mRNA editing complex involved into cytidine to uridine editing of a variety of mRNA molecules. Through the binding of their 3'UTR, also stabilizes a variety of mRNAs and regulates the expression of genes such as the interferon alpha/beta receptor and interleukin-10. Also involved in the alternative splicing of several genes including TJP1. Binds the pre-mRNA (U)GCAUG consensus sequences in downstream intronic regions of alternative exons regulating their exclusion and inclusion into mRNAs. Independently of its RNA-binding activity, could negatively regulate MAVS by promoting its lysosomal degradation. The chain is RNA-binding protein 47 from Rattus norvegicus (Rat).